The primary structure comprises 102 residues: Cysteine-rich venom protein VAR9 (102 aa).

Residues 1–19 (MILLKLYLTLAAILCQSRG) form the signal peptide. The SCP domain occupies 41 to 80 (NKHNDLRRTVDPPAKNMLKMSWDNIIAESAKRAALRCNYK).

The protein belongs to the CRISP family. Post-translationally, contains 8 disulfide bonds. Expressed by the venom gland.

It localises to the secreted. Blocks ryanodine receptors, and potassium channels. The polypeptide is Cysteine-rich venom protein VAR9 (Varanus varius (Lace monitor lizard)).